Consider the following 141-residue polypeptide: Nucleoside diphosphate kinase (141 aa).

The ATP site is built by K11, F59, R87, T93, R104, and N114. The active-site Pros-phosphohistidine intermediate is H117.

The protein belongs to the NDK family. As to quaternary structure, homotetramer. Mg(2+) is required as a cofactor.

The protein localises to the cytoplasm. It catalyses the reaction a 2'-deoxyribonucleoside 5'-diphosphate + ATP = a 2'-deoxyribonucleoside 5'-triphosphate + ADP. The catalysed reaction is a ribonucleoside 5'-diphosphate + ATP = a ribonucleoside 5'-triphosphate + ADP. Functionally, major role in the synthesis of nucleoside triphosphates other than ATP. The ATP gamma phosphate is transferred to the NDP beta phosphate via a ping-pong mechanism, using a phosphorylated active-site intermediate. The chain is Nucleoside diphosphate kinase from Mannheimia succiniciproducens (strain KCTC 0769BP / MBEL55E).